The chain runs to 286 residues: Bifunctional protein FolD (286 aa).

NADP(+) contacts are provided by residues 168–170 (GRG), Thr195, and Val236.

It belongs to the tetrahydrofolate dehydrogenase/cyclohydrolase family. As to quaternary structure, homodimer.

It catalyses the reaction (6R)-5,10-methylene-5,6,7,8-tetrahydrofolate + NADP(+) = (6R)-5,10-methenyltetrahydrofolate + NADPH. It carries out the reaction (6R)-5,10-methenyltetrahydrofolate + H2O = (6R)-10-formyltetrahydrofolate + H(+). It participates in one-carbon metabolism; tetrahydrofolate interconversion. Functionally, catalyzes the oxidation of 5,10-methylenetetrahydrofolate to 5,10-methenyltetrahydrofolate and then the hydrolysis of 5,10-methenyltetrahydrofolate to 10-formyltetrahydrofolate. This chain is Bifunctional protein FolD, found in Mycolicibacterium fortuitum (Mycobacterium fortuitum).